A 772-amino-acid chain; its full sequence is Phosphatidylinositol 4-phosphate 5-kinase 5 (772 aa).

A disordered region spans residues 22-56 (AKKRANSVFGTVSVAPHTDNDTTTDDNDDETTTNR). Positions 43-52 (TTTDDNDDET) are enriched in acidic residues. MORN repeat units follow at residues 75 to 97 (YTGQWYDSFPHGHGKYLWTDGCM), 98 to 120 (YIGDWYNGKTMGNGKFGWPSGAT), 121 to 143 (YEGEFKSGYMDGIGTYTGPSGDA), 144 to 166 (YKGQWVMNLKHGHGVKSFANGDA), 167 to 189 (YDGEWRRGLQEGQGKYQWSDGSY), 190 to 212 (YIGEWKNGTICGKGSFVWTNGNR), 213 to 235 (YDGFWDEGFPRGNGTFKWDNGSF), and 236 to 257 (YVGHWSKDPEEMNGTYYPSGNE). The 392-residue stretch at 377–768 (SKGHRNYELM…RFRDFIFKVF (392 aa)) folds into the PIPK domain. Positions 646–665 (SGARTPIGESEEESGPRLSR) are disordered. Residues 728 to 749 (YDISKKLEHAYKSIQYDPSSIS) form an activation loop region.

It carries out the reaction a 1,2-diacyl-sn-glycero-3-phospho-(1D-myo-inositol 4-phosphate) + ATP = a 1,2-diacyl-sn-glycero-3-phospho-(1D-myo-inositol-4,5-bisphosphate) + ADP + H(+). The protein is Phosphatidylinositol 4-phosphate 5-kinase 5 (PIP5K5) of Arabidopsis thaliana (Mouse-ear cress).